We begin with the raw amino-acid sequence, 482 residues long: Abscisic acid 8'-hydroxylase 2 (482 aa).

The chain crosses the membrane as a helical span at residues 20–40 (PALITLTIVVVVVVLLFKWWL). Cys-431 is a binding site for heme.

The protein belongs to the cytochrome P450 family. Requires heme as cofactor. Mainly expressed in dry seeds. Lower expression in rosette leaves, flowers, siliques and stems. Not expressed in roots. Expressed in both endosperm and vascular tissues of embryo during the seed development and in cortex and endodermis in germinating embryo.

The protein localises to the membrane. It catalyses the reaction 2-cis-(+)-abscisate + reduced [NADPH--hemoprotein reductase] + O2 = (+)-8'-hydroxyabscisate + oxidized [NADPH--hemoprotein reductase] + H2O + H(+). Its pathway is plant hormone degradation; abscisic acid degradation. In terms of biological role, involved in the oxidative degradation of abscisic acid, but not in the isomerization of the produced 8'-hydroxyabscisic acid (8'-OH-ABA) to (-)-phaseic acid (PA). Involved in the control of seed dormancy and germination. The protein is Abscisic acid 8'-hydroxylase 2 (CYP707A2) of Arabidopsis thaliana (Mouse-ear cress).